A 462-amino-acid polypeptide reads, in one-letter code: Tubulin alpha-4 chain (462 aa).

Residues glutamine 11, glutamate 82, serine 151, glycine 155, threonine 156, threonine 190, asparagine 217, and asparagine 239 each coordinate GTP. Glutamate 82 contacts Mg(2+). Glutamate 265 is an active-site residue.

It belongs to the tubulin family. In terms of assembly, dimer of alpha and beta chains. A typical microtubule is a hollow water-filled tube with an outer diameter of 25 nm and an inner diameter of 15 nM. Alpha-beta heterodimers associate head-to-tail to form protofilaments running lengthwise along the microtubule wall with the beta-tubulin subunit facing the microtubule plus end conferring a structural polarity. Microtubules usually have 13 protofilaments but different protofilament numbers can be found in some organisms and specialized cells. It depends on Mg(2+) as a cofactor.

It is found in the cytoplasm. It localises to the cytoskeleton. It carries out the reaction GTP + H2O = GDP + phosphate + H(+). Functionally, tubulin is the major constituent of microtubules, a cylinder consisting of laterally associated linear protofilaments composed of alpha- and beta-tubulin heterodimers. Microtubules grow by the addition of GTP-tubulin dimers to the microtubule end, where a stabilizing cap forms. Below the cap, tubulin dimers are in GDP-bound state, owing to GTPase activity of alpha-tubulin. The sequence is that of Tubulin alpha-4 chain (alphaTub67C) from Drosophila melanogaster (Fruit fly).